We begin with the raw amino-acid sequence, 248 residues long: DCN1-like protein 4 (248 aa).

The segment at 1–35 (MPRGKRRAADTISDNMDHGQPKRARTSYTSIPTQQ) is disordered. Positions 26 to 35 (TSYTSIPTQQ) are enriched in polar residues. Residues 47 to 235 (FSQKRCMAWF…MLDEFVEWLR (189 aa)) form the DCUN1 domain.

The protein localises to the nucleus. Inhibits neddylation of cullin components of SCF-type E3 ubiquitin ligase complexes and thus regulates SCF-type complex activity. Essential for development. Function inhibits cell proliferation and cell growth. The protein is DCN1-like protein 4 of Drosophila melanogaster (Fruit fly).